The primary structure comprises 388 residues: tRNA (guanine(26)-N(2))-dimethyltransferase (388 aa).

The 380-residue stretch at 4–383 folds into the Trm1 methyltransferase domain; that stretch reads RTIVEGTTKI…APIAEIKKII (380 aa). Positions 41, 78, 94, and 123 each coordinate S-adenosyl-L-methionine. Zn(2+) is bound by residues Cys-251, Cys-254, Cys-271, and Cys-274.

The protein belongs to the class I-like SAM-binding methyltransferase superfamily. Trm1 family.

The catalysed reaction is guanosine(26) in tRNA + 2 S-adenosyl-L-methionine = N(2)-dimethylguanosine(26) in tRNA + 2 S-adenosyl-L-homocysteine + 2 H(+). Its function is as follows. Dimethylates a single guanine residue at position 26 of a number of tRNAs using S-adenosyl-L-methionine as donor of the methyl groups. The chain is tRNA (guanine(26)-N(2))-dimethyltransferase from Methanosarcina mazei (strain ATCC BAA-159 / DSM 3647 / Goe1 / Go1 / JCM 11833 / OCM 88) (Methanosarcina frisia).